The primary structure comprises 215 residues: N-(5'-phosphoribosyl)anthranilate isomerase (215 aa).

Belongs to the TrpF family.

The catalysed reaction is N-(5-phospho-beta-D-ribosyl)anthranilate = 1-(2-carboxyphenylamino)-1-deoxy-D-ribulose 5-phosphate. It participates in amino-acid biosynthesis; L-tryptophan biosynthesis; L-tryptophan from chorismate: step 3/5. The chain is N-(5'-phosphoribosyl)anthranilate isomerase from Paracoccus denitrificans (strain Pd 1222).